A 416-amino-acid chain; its full sequence is E3 ubiquitin-protein ligase makorin-2 (416 aa).

2 C3H1-type zinc fingers span residues 2 to 29 (STKQ…HDLA) and 31 to 58 (SKPS…HTRP). Over residues 113 to 122 (NLSGMAERKT) the composition is skewed to basic and acidic residues. Positions 113–142 (NLSGMAERKTQPSMVSNPGSCSDPQPSPEM) are disordered. Residues 123–136 (QPSMVSNPGSCSDP) show a composition bias toward polar residues. Position 139 is a phosphoserine (serine 139). Residues 165-192 (SNEQQLCPYAAAGECRFGDACVYLHGEV) form a C3H1-type 3 zinc finger. Residues 193–222 (CEICRLQVLHPFDPEQRKAHEKICMLTFEH) form a makorin-type Cys-His region. The RING-type zinc-finger motif lies at 238-292 (CSICMEVILEKASASERRFGILSNCNHTYCLSCIRQWRCAKQFENPIIKSCPECR). A C3H1-type 4 zinc finger spans residues 321–350 (GMGKKACKYFEQGKGTCPFGSKCLYRHAYP).

Interacts with PDLIM2 (via LIM zinc-binding domain). Interacts with RELA. In terms of tissue distribution, expressed in sperm, with significantly reduced expression in sperm of patients with oligoasthenoteratozoospermia (at protein level). Widely expressed with expression in testis, ovary, small intestine, colon, peripheral blood leukocytes, fetal liver, bone marrow, thymus, lymph node and spleen.

It is found in the cytoplasm. The protein localises to the nucleus. The enzyme catalyses S-ubiquitinyl-[E2 ubiquitin-conjugating enzyme]-L-cysteine + [acceptor protein]-L-lysine = [E2 ubiquitin-conjugating enzyme]-L-cysteine + N(6)-ubiquitinyl-[acceptor protein]-L-lysine.. Its pathway is protein modification; protein ubiquitination. In terms of biological role, E3 ubiquitin ligase catalyzing the covalent attachment of ubiquitin moieties onto substrate proteins. Promotes the polyubiquitination and proteasome-dependent degradation of RELA/p65, thereby suppressing RELA-mediated NF-kappaB transactivation and negatively regulating inflammatory responses. Plays a role in the regulation of spermiation and in male fertility. In Homo sapiens (Human), this protein is E3 ubiquitin-protein ligase makorin-2 (MKRN2).